A 440-amino-acid polypeptide reads, in one-letter code: MSSSTHHWIARRGTALQGSLAIPGDKSVSHRAVMFAALADGVSQIDGFLEGEDTRSTAAIFAKLGVRIETPSASQRIVHGVGVDGLQPPTEVLDCGNAGTGMRLLAGLLAAQRFDSVLVGDASLSKRPMRRVTGPLAQMGARIETQDDGTPPLHVRGGQALHGIDFVSPVASAQVKSAVLLAGLYAQGETSVTEPHPTRDYTERMLSAFGVEIDFSPGKARLRGGQRLRATDIAVPADFSSAAFFIVAASVVPGSEVVLRAVGLNPRRTGLLAALRLMGADIGEENHAEHGGEPVADLHVRYAPLRGAQIPEALVPDMIDEFPALFVAAAAASGQTVVTGAAELRVKESDRLAAMATGLRTLGIQVDETPDGATIHGGSIGSGVIESHGDHRIAMAFAIAGQLSMGQVQVNDVANVATSFPGFDTLAQDVGFGLETAGHR.

3-phosphoshikimate-binding residues include K26, S27, and R31. K26 is a phosphoenolpyruvate binding site. Phosphoenolpyruvate contacts are provided by G99 and R127. Residues S172, Q174, D320, and K347 each coordinate 3-phosphoshikimate. Position 174 (Q174) interacts with phosphoenolpyruvate. Catalysis depends on D320, which acts as the Proton acceptor. Residues R351 and R392 each contribute to the phosphoenolpyruvate site.

The protein belongs to the EPSP synthase family. Monomer.

The protein resides in the cytoplasm. It catalyses the reaction 3-phosphoshikimate + phosphoenolpyruvate = 5-O-(1-carboxyvinyl)-3-phosphoshikimate + phosphate. It functions in the pathway metabolic intermediate biosynthesis; chorismate biosynthesis; chorismate from D-erythrose 4-phosphate and phosphoenolpyruvate: step 6/7. In terms of biological role, catalyzes the transfer of the enolpyruvyl moiety of phosphoenolpyruvate (PEP) to the 5-hydroxyl of shikimate-3-phosphate (S3P) to produce enolpyruvyl shikimate-3-phosphate and inorganic phosphate. In Xanthomonas axonopodis pv. citri (strain 306), this protein is 3-phosphoshikimate 1-carboxyvinyltransferase.